The chain runs to 484 residues: ATP-dependent RNA helicase DDX25 (484 aa).

At threonine 49 the chain carries Phosphothreonine. The Nuclear export signal motif lies at 62–75 (LAANSLLNKLIRQS). The short motif at 98-126 (KTFEELRLKEELLKGIYAMGFNRPSKIQE) is the Q motif element. Residues 101 to 115 (EELRLKEELLKGIYA) carry the Nuclear localization signal motif. Residues 131–301 (MMLAHPPQNL…ERIIPDPNVI (171 aa)) form the Helicase ATP-binding domain. 144–151 (SQSGTGKT) contributes to the ATP binding site. A DEAD box motif is present at residues 248-251 (DEAD). Residues 312-479 (NIRQYYVLCE…QLDPEDMDEI (168 aa)) form the Helicase C-terminal domain.

Belongs to the DEAD box helicase family. Phosphorylated on threonine residues. The phosphorylated form is found in the cytoplasm but not in the nucleus. As to expression, isoform 1 is expressed in germ cells. Isoform 2 is expressed in Leydig cells and in round spermatids of adult testis upon gonadotropin stimulation.

It localises to the cytoplasm. The protein localises to the nucleus. The catalysed reaction is ATP + H2O = ADP + phosphate + H(+). Its function is as follows. ATP-dependent RNA helicase. Required for mRNA export and translation regulation during spermatid development. In Mus musculus (Mouse), this protein is ATP-dependent RNA helicase DDX25 (Ddx25).